Consider the following 267-residue polypeptide: Zerumbone synthase (267 aa).

NAD(+) is bound at residue 9 to 33 (LVTGGASGIGESIARLFIEHGAKIC). Residue serine 142 coordinates substrate. The Proton acceptor role is filled by tyrosine 155.

It belongs to the short-chain dehydrogenases/reductases (SDR) family. Expressed in leaves, stems and rhizomes.

It carries out the reaction 10-hydroxy-alpha-humulene + NAD(+) = zerumbone + NADH + H(+). Functionally, catalyzes 8-hydroxy-alpha-humulene into zerumbone in presence of NAD. Also converts borneol to camphor in vitro. Zerumbone is a highly promising multi-anticancer agent. The protein is Zerumbone synthase (ZSD1) of Zingiber zerumbet (Shampoo ginger).